Consider the following 568-residue polypeptide: Dual specificity tyrosine-phosphorylation-regulated kinase 3 (568 aa).

Residues 1–168 (MKWKEKLGDG…HGVIGGPNNG (168 aa)) are disordered. Residues 77–114 (SNTVQSDGISDSEKCSPTVSQGKSSDCLNTVKSNSSSK) show a composition bias toward polar residues. In terms of domain architecture, Protein kinase spans 189–502 (YEVLKIIGKG…PAQALRHPWI (314 aa)). ATP-binding positions include 195-203 (IGKGSFGQV) and lysine 218. Aspartate 315 (proton acceptor) is an active-site residue. Serine 330 bears the Phosphoserine mark. The residue at position 349 (tyrosine 349) is a Phosphotyrosine. The Nuclear localization signal motif lies at 448-461 (RSRRGKKRGPPGSK).

This sequence belongs to the protein kinase superfamily. CMGC Ser/Thr protein kinase family. MNB/DYRK subfamily. As to quaternary structure, interacts with SIRT1. Mg(2+) serves as cofactor. In terms of processing, protein kinase activity is activated following autophosphorylation at Tyr-349. Autophosphorylation at Ser-330 stabilizes the protein and enhances the protein kinase activity. Post-translationally, ubiquitinated at anaphase by the anaphase-promoting complex (APC/C), leading to its degradation by the proteasome.

It localises to the nucleus. The protein localises to the cytoplasm. It is found in the nucleus speckle. The protein resides in the cytoplasmic granule. Its subcellular location is the cytoskeleton. It localises to the microtubule organizing center. The protein localises to the centrosome. It catalyses the reaction L-seryl-[protein] + ATP = O-phospho-L-seryl-[protein] + ADP + H(+). The enzyme catalyses L-threonyl-[protein] + ATP = O-phospho-L-threonyl-[protein] + ADP + H(+). It carries out the reaction L-tyrosyl-[protein] + ATP = O-phospho-L-tyrosyl-[protein] + ADP + H(+). Protein kinase activity is activated following autophosphorylation at Tyr-349. Dual-specificity protein kinase that promotes disassembly of several types of membraneless organelles during mitosis, such as stress granules, nuclear speckles and pericentriolar material. Dual-specificity tyrosine-regulated kinases (DYRKs) autophosphorylate a critical tyrosine residue in their activation loop and phosphorylate their substrate on serine and threonine residues. Acts as a central dissolvase of membraneless organelles during the G2-to-M transition, after the nuclear-envelope breakdown: acts by mediating phosphorylation of multiple serine and threonine residues in unstructured domains of proteins, such as SRRM1 and PCM1. Does not mediate disassembly of all membraneless organelles: disassembly of P-body and nucleolus is not regulated by DYRK3. Dissolution of membraneless organelles at the onset of mitosis is also required to release mitotic regulators, such as ZNF207, from liquid-unmixed organelles where they are sequestered and keep them dissolved during mitosis. Regulates mTORC1 by mediating the dissolution of stress granules: during stressful conditions, DYRK3 partitions from the cytosol to the stress granule, together with mTORC1 components, which prevents mTORC1 signaling. When stress signals are gone, the kinase activity of DYRK3 is required for the dissolution of stress granule and mTORC1 relocation to the cytosol: acts by mediating the phosphorylation of the mTORC1 inhibitor AKT1S1, allowing full reactivation of mTORC1 signaling. Also acts as a negative regulator of EPO-dependent erythropoiesis: may place an upper limit on red cell production during stress erythropoiesis. Inhibits cell death due to cytokine withdrawal in hematopoietic progenitor cells. Promotes cell survival upon genotoxic stress through phosphorylation of SIRT1: this in turn inhibits p53/TP53 activity and apoptosis. The chain is Dual specificity tyrosine-phosphorylation-regulated kinase 3 from Macaca fascicularis (Crab-eating macaque).